The primary structure comprises 478 residues: MDLLVMLLSLLVSYLIFKIWKRIDSKRDQNCYILDYQCHKPSDDRMVNTQFSGDIILRNKHLRLNEYKFLLKAIVSSGIGEQTYAPRLFFEGREQRPTLQDGLSEMEEFYIDTIEKVLKRNKISPSEIDILVVNVSMLNSTPSLSARIINHYKMREDIKVFNLTAMGCSASVISIDIVKNIFKTYKNKLALVVTSESLSPNWYSGNNRSMILANCLFRSGGCAVLLTNKRSLSRRAMFKLRCLVRTHHGARDDSFNACVQKEDELGHIGVHLDKTLPKAATRAFIDNLKVITPKILPVTELLRFMLCLLLKKLRSSPSKGSTNVTQAAPKAGVKAGINFKTGIDHFCIHTGGKAVIDAIGYSLDLNEYDLEPARMTLHRFGNTSASSLWYVLGYMEAKKRLKRGDRVFMISFGAGFKCNSCVWEVVRDLNVGEAVGNVWNHCINQYPPKSILNPFFEKYGWIHEEEDPDTFKMPEGFM.

Residues 1–25 form the signal peptide; that stretch reads MDLLVMLLSLLVSYLIFKIWKRIDS. Residues 26 to 313 enclose the FAE domain; it reads KRDQNCYILD…FMLCLLLKKL (288 aa). Active-site residues include cysteine 168, histidine 247, histidine 345, histidine 349, histidine 378, and asparagine 382.

This sequence belongs to the thiolase-like superfamily. Chalcone/stilbene synthases family. As to expression, expressed in siliques, leaves, stems and seedlings.

It is found in the endoplasmic reticulum. It catalyses the reaction a very-long-chain acyl-CoA + malonyl-CoA + H(+) = a very-long-chain 3-oxoacyl-CoA + CO2 + CoA. It functions in the pathway lipid metabolism; fatty acid biosynthesis. The chain is 3-ketoacyl-CoA synthase 3 from Arabidopsis thaliana (Mouse-ear cress).